The primary structure comprises 172 residues: L-amino acid oxidase (172 aa).

44–47 (GPMR) serves as a coordination point for FAD. 2 residues coordinate substrate: Arg47 and His103.

Belongs to the flavin monoamine oxidase family. FIG1 subfamily. Heterodimer; non-covalently linked. FAD serves as cofactor. In terms of processing, N-glycosylated. As to expression, expressed by the venom gland.

The protein localises to the secreted. The enzyme catalyses an L-alpha-amino acid + O2 + H2O = a 2-oxocarboxylate + H2O2 + NH4(+). The catalysed reaction is L-leucine + O2 + H2O = 4-methyl-2-oxopentanoate + H2O2 + NH4(+). It catalyses the reaction L-phenylalanine + O2 + H2O = 3-phenylpyruvate + H2O2 + NH4(+). It carries out the reaction L-tryptophan + O2 + H2O = indole-3-pyruvate + H2O2 + NH4(+). The enzyme catalyses L-methionine + O2 + H2O = 4-methylsulfanyl-2-oxobutanoate + H2O2 + NH4(+). The catalysed reaction is L-isoleucine + O2 + H2O = (S)-3-methyl-2-oxopentanoate + H2O2 + NH4(+). It catalyses the reaction L-arginine + O2 + H2O = 5-guanidino-2-oxopentanoate + H2O2 + NH4(+). It carries out the reaction L-tyrosine + O2 + H2O = 3-(4-hydroxyphenyl)pyruvate + H2O2 + NH4(+). Activity is increased by Mn(2+) ions. Inhibited by Zn(2+), Ni(2+), Co(2+), Cu(2+) and Al(3+). No significant activity change by Na(+), K(+), Ca(2+), Mg(2+) and Ba(2+) ions. Both isoform are completely inhibited by L-Cys and reduced glutathione. O-phenanthroline, beta-mercaptoethanol and PMSF completely inhibit the enzymatic activity of LAAOII, but have no activity on LAAOI. Iodoacetic acid inhibits the enzymatic activity of LAAOII by 46% but has no effect on the LAAOI activity. Catalyzes an oxidative deamination of predominantly hydrophobic and aromatic L-amino acids, thus producing hydrogen peroxide that may contribute to the diverse toxic effects of this enzyme. Shows high specificity for L-Arg, L-Met, L-Phe, L-Leu, L-Tyr, L-Ile and L-Trp, low specificity for L-Val, L-Ala, L-Asn, L-Gln, and no specificity for L-Pro, L-Ser, L-Thr, L-Cys, L-Gly and L-Asp. Exhibits diverse biological activities, such as hemorrhage, hemolysis, edema, antibacterial and antiparasitic activities, as well as regulation of platelet aggregation. Its effect on platelets is controversial, since it either induces aggregation or inhibits agonist-induced aggregation. These different effects are probably due to different experimental conditions. The sequence is that of L-amino acid oxidase from Cerastes cerastes (Horned desert viper).